The chain runs to 240 residues: Lysoplasmalogenase TMEM86A (240 aa).

Residues 1-21 lie on the Cytoplasmic side of the membrane; sequence MVSPVTVVKSEGPKLVPFFKA. The chain crosses the membrane as a helical span at residues 22 to 42; it reads TCVYFVLWLPSSSPSWVSALI. Lysine 43 is a topological domain (extracellular). Residues 44 to 64 form a helical membrane-spanning segment; sequence CLPIFCLWLFLLAHGLGFLLT. Residues 65–70 lie on the Cytoplasmic side of the membrane; that stretch reads HPSATR. Residues 71–91 form a helical membrane-spanning segment; it reads IFVGLVFSAIGDAFLIWQDQG. Tyrosine 92 is a topological domain (extracellular). Residues 93–113 traverse the membrane as a helical segment; the sequence is FVHGMLMFAVTHMLYASAFGM. At 114-115 the chain is on the cytoplasmic side; that stretch reads RP. A helical transmembrane segment spans residues 116 to 136; that stretch reads LGLRTGLLMVILSGLCYAFLY. Topologically, residues 137–138 are extracellular; sequence PN. Residues 139-159 traverse the membrane as a helical segment; it reads LTGAFTYVVGVYVAIIGFMGW. At 160-174 the chain is on the cytoplasmic side; sequence RAMAGLQLVGAAWRW. Residues 175-195 form a helical membrane-spanning segment; that stretch reads TELAAGTGALLFIVSDLTIAL. Topologically, residues 196 to 206 are extracellular; it reads DKFCFPVPYSR. Residues 207-227 form a helical membrane-spanning segment; it reads ALIMSTYYAAQMLIALSAVES. Over 228-240 the chain is Cytoplasmic; sequence REPVEDYRLSKAK.

The protein belongs to the TMEM86 family.

The protein localises to the endoplasmic reticulum membrane. The catalysed reaction is a 1-O-(1Z-alkenyl)-sn-glycero-3-phosphocholine + H2O = a 2,3-saturated aldehyde + sn-glycerol 3-phosphocholine. The enzyme catalyses a 1-O-(1Z-alkenyl)-sn-glycero-3-phosphoethanolamine + H2O = a 2,3-saturated aldehyde + sn-glycero-3-phosphoethanolamine. In terms of biological role, catalyzes the hydrolysis of the vinyl ether bond of choline or ethanolamine lysoplasmalogens, forming fatty aldehyde and glycerophosphocholine or glycerophosphoethanolamine, respectively and is specific for the sn-2-deacylated (lyso) form of plasmalogen. Plays an important role in lysoplasmalogen metabolism in the adipocyte tissue and macrophages. The polypeptide is Lysoplasmalogenase TMEM86A (TMEM86A) (Bos taurus (Bovine)).